A 712-amino-acid polypeptide reads, in one-letter code: Elongation factor G (712 aa).

Residues 8 to 290 (TRYRNIGISA…AVIEFLPSPT (283 aa)) form the tr-type G domain. Residues 17-24 (AHIDAGKT), 88-92 (DTPGH), and 142-145 (NKMD) each bind GTP.

The protein belongs to the TRAFAC class translation factor GTPase superfamily. Classic translation factor GTPase family. EF-G/EF-2 subfamily.

It localises to the cytoplasm. In terms of biological role, catalyzes the GTP-dependent ribosomal translocation step during translation elongation. During this step, the ribosome changes from the pre-translocational (PRE) to the post-translocational (POST) state as the newly formed A-site-bound peptidyl-tRNA and P-site-bound deacylated tRNA move to the P and E sites, respectively. Catalyzes the coordinated movement of the two tRNA molecules, the mRNA and conformational changes in the ribosome. The sequence is that of Elongation factor G from Acinetobacter baumannii (strain SDF).